The following is a 332-amino-acid chain: MKQVQTKRDWKKLAYDVVEEKMITKEDAIAILEADDTEVLEIMNAAYIIRHHHFGKKVKLNMIINTKSGLCPEDCGYCSQSIISEAPIDKYAWLTQEKIVEGAHEAIRRKAGTYCIVASGRRPTDKEVNHVIGAVKEIRETTDLKICCCLGFLNEDQAGLLAEAGVHRYNHNLNTHANNYDSICSTHTYDDRVDTVQKAKQAGISPCSGAIFGMGETIEERAEIAFELQRIDADSIPCNFLVAVKGTPLEGQKELTPVDCLKVLAMMRFVNPTKEIRISGGREINLRSVQPIGLFAANSIFVGDYLTTAGQEPTADWGMIADLGFEIEECAL.

Residues 53–282 (HFGKKVKLNM…TKEIRISGGR (230 aa)) enclose the Radical SAM core domain. Positions 71, 75, and 78 each coordinate [4Fe-4S] cluster. [2Fe-2S] cluster-binding residues include Cys115, Cys147, Cys207, and Arg277.

This sequence belongs to the radical SAM superfamily. Biotin synthase family. Homodimer. It depends on [4Fe-4S] cluster as a cofactor. Requires [2Fe-2S] cluster as cofactor.

The enzyme catalyses (4R,5S)-dethiobiotin + (sulfur carrier)-SH + 2 reduced [2Fe-2S]-[ferredoxin] + 2 S-adenosyl-L-methionine = (sulfur carrier)-H + biotin + 2 5'-deoxyadenosine + 2 L-methionine + 2 oxidized [2Fe-2S]-[ferredoxin]. Its pathway is cofactor biosynthesis; biotin biosynthesis; biotin from 7,8-diaminononanoate: step 2/2. Functionally, catalyzes the conversion of dethiobiotin (DTB) to biotin by the insertion of a sulfur atom into dethiobiotin via a radical-based mechanism. This chain is Biotin synthase, found in Bacillus cereus (strain B4264).